We begin with the raw amino-acid sequence, 70 residues long: Cold shock-like protein CspI (70 aa).

The region spanning 7 to 67 (GLVKWFNPEK…GPKGPAAVHV (61 aa)) is the CSD domain.

It is found in the cytoplasm. The protein is Cold shock-like protein CspI (cspI) of Escherichia coli O6:H1 (strain CFT073 / ATCC 700928 / UPEC).